The following is a 412-amino-acid chain: uncharacterized protein (412 aa).

The 59-residue stretch at 6 to 64 folds into the TRAM domain; that stretch reads ELAKGDIISVEVLRPAHGGEGIGHHDGRVIFVKGGIPGDVVDVEIAQLKKKWARGEVVK. Residues glutamine 242, tyrosine 278, glutamate 300, and aspartate 341 each coordinate S-adenosyl-L-methionine. The Nucleophile role is filled by cysteine 368.

It belongs to the class I-like SAM-binding methyltransferase superfamily. RNA M5U methyltransferase family.

This is an uncharacterized protein from Corynebacterium glutamicum (strain ATCC 13032 / DSM 20300 / JCM 1318 / BCRC 11384 / CCUG 27702 / LMG 3730 / NBRC 12168 / NCIMB 10025 / NRRL B-2784 / 534).